The chain runs to 102 residues: Large ribosomal subunit protein bL21 (102 aa).

Belongs to the bacterial ribosomal protein bL21 family. Part of the 50S ribosomal subunit. Contacts protein L20.

Its function is as follows. This protein binds to 23S rRNA in the presence of protein L20. This Pseudarthrobacter chlorophenolicus (strain ATCC 700700 / DSM 12829 / CIP 107037 / JCM 12360 / KCTC 9906 / NCIMB 13794 / A6) (Arthrobacter chlorophenolicus) protein is Large ribosomal subunit protein bL21.